A 382-amino-acid chain; its full sequence is Serine/threonine-protein kinase US3 homolog (382 aa).

Residues 1–10 (MENKQCDHLT) are compositionally biased toward basic and acidic residues. The segment at 1–75 (MENKQCDHLT…ASESDEDDDD (75 aa)) is disordered. A compositionally biased stretch (polar residues) spans 12 to 24 (WFSTTSDASESMD). The segment covering 45-75 (ADEDLYSDISEGDLEYSDCDSASESDEDDDD) has biased composition (acidic residues). One can recognise a Protein kinase domain in the interval 93–379 (YTVIKTLTPG…AEELLSYPMF (287 aa)). Residues 99–107 (LTPGSEGRV) and K122 contribute to the ATP site. D207 functions as the Proton acceptor in the catalytic mechanism.

Belongs to the protein kinase superfamily. Ser/Thr protein kinase family. Phosphorylated by protein 49; this phosphorylation regulates subsequent phosphorylation of proteins 26 and 29 by US3 homolog. Autophosphorylated.

Its subcellular location is the host cytoplasm. It is found in the host nucleus. It catalyses the reaction L-seryl-[protein] + ATP = O-phospho-L-seryl-[protein] + ADP + H(+). The catalysed reaction is L-threonyl-[protein] + ATP = O-phospho-L-threonyl-[protein] + ADP + H(+). Multifunctional serine/threonine kinase that plays a role in several processes including egress of virus particles from the nucleus, modulation of the actin cytoskeleton and inhibition of apoptosis. Phosphorylates protein 26 and 29, two critical regulators of capsid budding from nucleus to endoplasmic reticulum, thereby facilitating virion egress. Modulates and redistributes host components of the nuclear envelope, including LMNA, emerin/EMD and the nuclear matrix protein MATR3. Phosphorylates envelope glycoprotein B (gB), probably to direct it to the cell surface. Promotes virus intracellular spread by restructuring host cell cytoskeleton. Blocks host apoptosis to extend cell survival and allow efficient viral replication. Promotes viral gene expression by phosphorylating host HDAC2 to reduce viral genome silencing. The sequence is that of Serine/threonine-protein kinase US3 homolog from Equine herpesvirus 1 (strain Ab4p) (EHV-1).